Here is a 130-residue protein sequence, read N- to C-terminus: Small ribosomal subunit protein uS11 (130 aa).

It belongs to the universal ribosomal protein uS11 family. In terms of assembly, part of the 30S ribosomal subunit. Interacts with proteins S7 and S18. Binds to IF-3.

Its function is as follows. Located on the platform of the 30S subunit, it bridges several disparate RNA helices of the 16S rRNA. Forms part of the Shine-Dalgarno cleft in the 70S ribosome. In Prochlorococcus marinus (strain MIT 9312), this protein is Small ribosomal subunit protein uS11.